Here is a 379-residue protein sequence, read N- to C-terminus: UDP-N-acetylglucosamine--N-acetylmuramyl-(pentapeptide) pyrophosphoryl-undecaprenol N-acetylglucosamine transferase (379 aa).

Residues 17–19, Asn-128, Arg-169, Ser-197, and Gln-298 each bind UDP-N-acetyl-alpha-D-glucosamine; that span reads TGG.

It belongs to the glycosyltransferase 28 family. MurG subfamily.

Its subcellular location is the cell inner membrane. It carries out the reaction di-trans,octa-cis-undecaprenyl diphospho-N-acetyl-alpha-D-muramoyl-L-alanyl-D-glutamyl-meso-2,6-diaminopimeloyl-D-alanyl-D-alanine + UDP-N-acetyl-alpha-D-glucosamine = di-trans,octa-cis-undecaprenyl diphospho-[N-acetyl-alpha-D-glucosaminyl-(1-&gt;4)]-N-acetyl-alpha-D-muramoyl-L-alanyl-D-glutamyl-meso-2,6-diaminopimeloyl-D-alanyl-D-alanine + UDP + H(+). It functions in the pathway cell wall biogenesis; peptidoglycan biosynthesis. Functionally, cell wall formation. Catalyzes the transfer of a GlcNAc subunit on undecaprenyl-pyrophosphoryl-MurNAc-pentapeptide (lipid intermediate I) to form undecaprenyl-pyrophosphoryl-MurNAc-(pentapeptide)GlcNAc (lipid intermediate II). This is UDP-N-acetylglucosamine--N-acetylmuramyl-(pentapeptide) pyrophosphoryl-undecaprenol N-acetylglucosamine transferase from Brucella canis (strain ATCC 23365 / NCTC 10854 / RM-666).